The following is an 84-amino-acid chain: MKLSCLLLTLAIIFVLTIVHAPNVKAKALADPESDAVGFADAVGEADPFDITKLNIKKLTKATCKVISKGASMCKVLFDKKKQE.

An N-terminal signal peptide occupies residues 1–21 (MKLSCLLLTLAIIFVLTIVHA). Positions 22 to 48 (PNVKAKALADPESDAVGFADAVGEADP) are excised as a propeptide.

It belongs to the formicidae venom precursor-01 superfamily. Ant pilosulin family. As to expression, expressed by the venom gland.

Its subcellular location is the secreted. Functionally, shows activity against E.coli and S.aureus (MIC&lt;6.25 uM), moderate activity against P.aeruginosa (MIC&lt;25 uM), weak activity against B.subtilis (MIC&lt;50 uM), and has no effect against L.garvieae, C.albicans, and S.cerevisiae. Has no hemolytic nor cytolytic activity. Causes an IgE-independent histamine release. The chain is M-myrmeciitoxin-Mb2a from Myrmecia banksi (Jack jumper ant).